The sequence spans 546 residues: Chaperonin GroEL (546 aa).

ATP-binding positions include 30–33 (TLGP), lysine 51, 87–91 (DGTTT), glycine 415, and aspartate 497. Positions 527–546 (PKKDSPAPAMPGGGMGGMDF) are disordered. Positions 537-546 (PGGGMGGMDF) are enriched in gly residues.

It belongs to the chaperonin (HSP60) family. As to quaternary structure, forms a cylinder of 14 subunits composed of two heptameric rings stacked back-to-back. Interacts with the co-chaperonin GroES.

Its subcellular location is the cytoplasm. The catalysed reaction is ATP + H2O + a folded polypeptide = ADP + phosphate + an unfolded polypeptide.. Its function is as follows. Together with its co-chaperonin GroES, plays an essential role in assisting protein folding. The GroEL-GroES system forms a nano-cage that allows encapsulation of the non-native substrate proteins and provides a physical environment optimized to promote and accelerate protein folding. The polypeptide is Chaperonin GroEL (Methylorubrum populi (strain ATCC BAA-705 / NCIMB 13946 / BJ001) (Methylobacterium populi)).